The following is a 1569-amino-acid chain: Zinc finger protein GLI3 (1569 aa).

Polar residues-rich tracts occupy residues 1 to 10 and 416 to 432; these read MEAQSRSTTA and AAQQ…SSTG. Disordered regions lie at residues 1–79 and 414–461; these read MEAQ…STSS and SEAA…DQPD. 5 consecutive C2H2-type zinc fingers follow at residues 485–510, 518–545, 551–575, 581–606, and 612–637; these read TNCH…NNDH, FVCR…MRRH, HKCT…LRSH, YVCE…NRTH, and YVCK…KTVH. Disordered regions lie at residues 625 to 731, 899 to 921, 1202 to 1228, and 1335 to 1364; these read DPSS…YTNS, SYDP…DGLP, PKSG…QNLD, and SNQT…GEQQ. A compositionally biased stretch (basic and acidic residues) spans 637–653; that stretch reads HGPEAHVTKKQRGDIHP. Polar residues predominate over residues 663–676; it reads SHSQSRSPGQQTQG. The span at 678-704 shows a compositional bias: basic and acidic residues; sequence HGEHKDLSNTTSKHEECLQVRSVKTEK. The segment covering 705–731 has biased composition (polar residues); sequence PMSSQPSPGGKSSCSRQQSPISNYTNS. Residues 1335 to 1350 are compositionally biased toward low complexity; that stretch reads SNQTTSGQNGNTTDGT. Polar residues predominate over residues 1352–1364; sequence SFLSTTQNGGEQQ.

This sequence belongs to the GLI C2H2-type zinc-finger protein family. Phosphorylation is essential for its proteolytic processing. Post-translationally, the repressor form (GLI3R), a C-terminally truncated form is generated from the full-length GLI3 protein (GLI3FL) through proteolytic processing.

Its subcellular location is the nucleus. The protein resides in the cytoplasm. Its function is as follows. Has a dual function as a transcriptional activator and a repressor of the sonic hedgehog (Shh) pathway, and may play a role in limb development. May bind to the minimal GLI-consensus sequence 5'-GGGTGGTC-3'. Has an essential role in the early embryonic patterning of mesoderm and neuroectoderm. The sequence is that of Zinc finger protein GLI3 (gli3) from Xenopus laevis (African clawed frog).